The primary structure comprises 62 residues: Short neurotoxin C (62 aa).

Residues 1–16 are compositionally biased toward polar residues; that stretch reads RRCFNQQSSQPQTNKS. Residues 1 to 21 form a disordered region; sequence RRCFNQQSSQPQTNKSCPPGE. 4 disulfides stabilise this stretch: Cys3–Cys24, Cys17–Cys41, Cys43–Cys54, and Cys55–Cys60.

It belongs to the three-finger toxin family. Short-chain subfamily. Type I alpha-neurotoxin sub-subfamily. In terms of tissue distribution, expressed by the venom gland.

Its subcellular location is the secreted. Binds to muscle nicotinic acetylcholine receptor (nAChR) and inhibit acetylcholine from binding to the receptor, thereby impairing neuromuscular transmission. The sequence is that of Short neurotoxin C from Laticauda crockeri (Crocker's sea snake).